Here is an 83-residue protein sequence, read N- to C-terminus: Cytochrome b559 subunit alpha (83 aa).

A helical transmembrane segment spans residues 21–35; sequence VIHSITIPSLFIAGW. His-23 lines the heme pocket.

The protein belongs to the PsbE/PsbF family. As to quaternary structure, heterodimer of an alpha subunit and a beta subunit. PSII is composed of 1 copy each of membrane proteins PsbA, PsbB, PsbC, PsbD, PsbE, PsbF, PsbH, PsbI, PsbJ, PsbK, PsbL, PsbM, PsbT, PsbX, PsbY, PsbZ, Psb30/Ycf12, at least 3 peripheral proteins of the oxygen-evolving complex and a large number of cofactors. It forms dimeric complexes. Heme b is required as a cofactor.

It localises to the plastid. The protein localises to the chloroplast thylakoid membrane. Its function is as follows. This b-type cytochrome is tightly associated with the reaction center of photosystem II (PSII). PSII is a light-driven water:plastoquinone oxidoreductase that uses light energy to abstract electrons from H(2)O, generating O(2) and a proton gradient subsequently used for ATP formation. It consists of a core antenna complex that captures photons, and an electron transfer chain that converts photonic excitation into a charge separation. This is Cytochrome b559 subunit alpha from Huperzia lucidula (Shining clubmoss).